A 106-amino-acid chain; its full sequence is 3-phenylpropionate/cinnamic acid dioxygenase ferredoxin subunit (106 aa).

The 96-residue stretch at 4–99 (IYACPVADVP…VHVEGGDIFI (96 aa)) folds into the Rieske domain. [2Fe-2S] cluster is bound by residues cysteine 42, histidine 44, cysteine 62, and histidine 65.

Belongs to the bacterial ring-hydroxylating dioxygenase ferredoxin component family. This dioxygenase system consists of four proteins: the two subunits of the hydroxylase component (HcaE and HcaF), a ferredoxin (HcaC) and a ferredoxin reductase (HcaD). [2Fe-2S] cluster is required as a cofactor.

The protein operates within aromatic compound metabolism; 3-phenylpropanoate degradation. Its function is as follows. Part of the multicomponent 3-phenylpropionate dioxygenase, that converts 3-phenylpropionic acid (PP) and cinnamic acid (CI) into 3-phenylpropionate-dihydrodiol (PP-dihydrodiol) and cinnamic acid-dihydrodiol (CI-dihydrodiol), respectively. This protein seems to be a 2Fe-2S ferredoxin. The protein is 3-phenylpropionate/cinnamic acid dioxygenase ferredoxin subunit of Shigella flexneri serotype 5b (strain 8401).